The chain runs to 70 residues: U-scoloptoxin(04)-Er3a (70 aa).

The N-terminal stretch at 1 to 24 is a signal peptide; the sequence is MAAIRNLLILTMLLIVCVSWNADA.

This sequence belongs to the scoloptoxin-04 family. In terms of processing, contains 2 disulfide bonds. As to expression, expressed by the venom gland.

The protein localises to the secreted. This is U-scoloptoxin(04)-Er3a from Ethmostigmus rubripes (Giant centipede).